Reading from the N-terminus, the 198-residue chain is uncharacterized protein (198 aa).

Transmembrane regions (helical) follow at residues 20-40 (VIVG…GLWA), 70-90 (FFVA…TASV), 107-127 (LAIG…LLVW), and 164-184 (VAAT…VLAA).

It to M.tuberculosis Rv1591.

It is found in the cell membrane. This is an uncharacterized protein from Mycobacterium leprae (strain TN).